We begin with the raw amino-acid sequence, 184 residues long: Ribosome-recycling factor (184 aa).

The tract at residues 137–158 is disordered; it reads DSIKAKQKDGIPEDEAKRGQDE.

Belongs to the RRF family.

The protein localises to the cytoplasm. Responsible for the release of ribosomes from messenger RNA at the termination of protein biosynthesis. May increase the efficiency of translation by recycling ribosomes from one round of translation to another. The protein is Ribosome-recycling factor of Desulforamulus reducens (strain ATCC BAA-1160 / DSM 100696 / MI-1) (Desulfotomaculum reducens).